Here is a 522-residue protein sequence, read N- to C-terminus: Glucans biosynthesis protein G (522 aa).

The signal sequence occupies residues 1-33; sequence MLVNILSKKPRAASVRWLGATVLFTLLTSPAWA.

The protein belongs to the OpgD/OpgG family.

It localises to the periplasm. It participates in glycan metabolism; osmoregulated periplasmic glucan (OPG) biosynthesis. Functionally, involved in the biosynthesis of osmoregulated periplasmic glucans (OPGs). This Serratia proteamaculans (strain 568) protein is Glucans biosynthesis protein G.